Reading from the N-terminus, the 131-residue chain is Phosphomevalonate dehydratase small subunit (131 aa).

Ser-62 (proton acceptor) is an active-site residue.

Belongs to the AcnX type II small subunit family. In terms of assembly, heterodimer composed of a large subunit (PMDh-L) and a small subunit (PMDh-S).

It catalyses the reaction (R)-5-phosphomevalonate = (2E)-3-methyl-5-phosphooxypent-2-enoate + H2O. Its pathway is isoprenoid biosynthesis; isopentenyl diphosphate biosynthesis via mevalonate pathway. In terms of biological role, component of a hydro-lyase that catalyzes the dehydration of mevalonate 5-phosphate (MVA5P) to form trans-anhydromevalonate 5-phosphate (tAHMP). Involved in the archaeal mevalonate (MVA) pathway, which provides fundamental precursors for isoprenoid biosynthesis, such as isopentenyl diphosphate (IPP) and dimethylallyl diphosphate (DMAPP). This is Phosphomevalonate dehydratase small subunit from Thermococcus gammatolerans (strain DSM 15229 / JCM 11827 / EJ3).